A 299-amino-acid chain; its full sequence is Very long chain fatty acid elongase 5 (299 aa).

At Met-1 the chain carries N-acetylmethionine. Transmembrane regions (helical) follow at residues 26–46 (WFLL…LLIV), 64–84 (ILVV…YELV), 112–132 (VLWW…FFIL), 139–158 (ITVL…WFVM), 168–187 (FGAT…YGLS), 205–225 (GQLV…IWPC), and 227–247 (FPLG…ALFT).

It belongs to the ELO family. ELOVL5 subfamily. In terms of assembly, interacts with TECR. As to expression, highly expressed in lung and brain.

The protein localises to the endoplasmic reticulum membrane. Its subcellular location is the cell projection. It is found in the dendrite. It catalyses the reaction a very-long-chain acyl-CoA + malonyl-CoA + H(+) = a very-long-chain 3-oxoacyl-CoA + CO2 + CoA. The enzyme catalyses (6Z,9Z,12Z,15Z)-octadecatetraenoyl-CoA + malonyl-CoA + H(+) = (8Z,11Z,14Z,17Z)-3-oxoicosatetraenoyl-CoA + CO2 + CoA. The catalysed reaction is (6Z,9Z,12Z)-octadecatrienoyl-CoA + malonyl-CoA + H(+) = (8Z,11Z,14Z)-3-oxoeicosatrienoyl-CoA + CO2 + CoA. It carries out the reaction (5Z,8Z,11Z,14Z,17Z)-eicosapentaenoyl-CoA + malonyl-CoA + H(+) = 3-oxo-(7Z,10Z,13Z,16Z,19Z)-docosapentaenoyl-CoA + CO2 + CoA. It catalyses the reaction (5Z,8Z,11Z,14Z)-eicosatetraenoyl-CoA + malonyl-CoA + H(+) = (7Z,10Z,13Z,16Z)-3-oxodocosatetraenoyl-CoA + CO2 + CoA. The enzyme catalyses (9Z,12Z,15Z)-octadecatrienoyl-CoA + malonyl-CoA + H(+) = (11Z,14Z,17Z)-3-oxoeicosatrienoyl-CoA + CO2 + CoA. The catalysed reaction is (9Z)-hexadecenoyl-CoA + malonyl-CoA + H(+) = 3-oxo-(11Z)-octadecenoyl-CoA + CO2 + CoA. It carries out the reaction (9Z)-octadecenoyl-CoA + malonyl-CoA + H(+) = 3-oxo-(11Z)-eicosenoyl-CoA + CO2 + CoA. It catalyses the reaction (11Z)-octadecenoyl-CoA + malonyl-CoA + H(+) = 3-oxo-(13Z)-eicosenoyl-CoA + CO2 + CoA. The enzyme catalyses (9Z,12Z)-octadecadienoyl-CoA + malonyl-CoA + H(+) = (11Z,14Z)-3-oxoicosa-11,14-dienoyl-CoA + CO2 + CoA. It functions in the pathway lipid metabolism; polyunsaturated fatty acid biosynthesis. Catalyzes the first and rate-limiting reaction of the four reactions that constitute the long-chain fatty acids elongation cycle. This endoplasmic reticulum-bound enzymatic process allows the addition of 2 carbons to the chain of long- and very long-chain fatty acids (VLCFAs) per cycle. Condensing enzyme that acts specifically toward polyunsaturated acyl-CoA with the higher activity toward C18:3(n-6) acyl-CoA. May participate in the production of monounsaturated and of polyunsaturated VLCFAs of different chain lengths that are involved in multiple biological processes as precursors of membrane lipids and lipid mediators. In conditions where the essential linoleic and alpha linoleic fatty acids are lacking it is also involved in the synthesis of Mead acid from oleic acid. The chain is Very long chain fatty acid elongase 5 from Rattus norvegicus (Rat).